Consider the following 385-residue polypeptide: UDP-N-acetylglucosamine--N-acetylmuramyl-(pentapeptide) pyrophosphoryl-undecaprenol N-acetylglucosamine transferase (385 aa).

Residues 11 to 13 (TGG), N117, R160, S215, and Q317 each bind UDP-N-acetyl-alpha-D-glucosamine.

Belongs to the glycosyltransferase 28 family. MurG subfamily.

Its subcellular location is the cell inner membrane. The enzyme catalyses di-trans,octa-cis-undecaprenyl diphospho-N-acetyl-alpha-D-muramoyl-L-alanyl-D-glutamyl-meso-2,6-diaminopimeloyl-D-alanyl-D-alanine + UDP-N-acetyl-alpha-D-glucosamine = di-trans,octa-cis-undecaprenyl diphospho-[N-acetyl-alpha-D-glucosaminyl-(1-&gt;4)]-N-acetyl-alpha-D-muramoyl-L-alanyl-D-glutamyl-meso-2,6-diaminopimeloyl-D-alanyl-D-alanine + UDP + H(+). Its pathway is cell wall biogenesis; peptidoglycan biosynthesis. In terms of biological role, cell wall formation. Catalyzes the transfer of a GlcNAc subunit on undecaprenyl-pyrophosphoryl-MurNAc-pentapeptide (lipid intermediate I) to form undecaprenyl-pyrophosphoryl-MurNAc-(pentapeptide)GlcNAc (lipid intermediate II). This chain is UDP-N-acetylglucosamine--N-acetylmuramyl-(pentapeptide) pyrophosphoryl-undecaprenol N-acetylglucosamine transferase, found in Rickettsia typhi (strain ATCC VR-144 / Wilmington).